The primary structure comprises 491 residues: (S)-canadine synthase (491 aa).

The helical transmembrane segment at leucine 6–phenylalanine 26 threads the bilayer. Position 434 (cysteine 434) interacts with heme.

It belongs to the cytochrome P450 family. Heme is required as a cofactor. In terms of tissue distribution, expressed at low levels in roots.

It localises to the endoplasmic reticulum membrane. Its subcellular location is the microsome membrane. It carries out the reaction (S)-tetrahydrocolumbamine + reduced [NADPH--hemoprotein reductase] + O2 = (S)-canadine + oxidized [NADPH--hemoprotein reductase] + 2 H2O + H(+). Its function is as follows. Involved in the last but one step of the biosynthesis of berberine, an antimicrobial benzylisoquinoline alkaloid. Converts (S)-tetrahydrocolumbamine (THC) to (S)-tetrahydroberberine (THB) also called (S)-canadine. This chain is (S)-canadine synthase (CYP719A1), found in Coptis japonica (Japanese goldthread).